Here is a 104-residue protein sequence, read N- to C-terminus: MAAKIRRQDEVIVLAGKDQGKRGKVSQVLTTGKLIVEGINLVKKHQKPNPQLGVAGGIVEQEAPIQASNVAIFNSATGKADRVGFRFEDGKKVRFFKSNSELVK.

The protein belongs to the universal ribosomal protein uL24 family. As to quaternary structure, part of the 50S ribosomal subunit.

Its function is as follows. One of two assembly initiator proteins, it binds directly to the 5'-end of the 23S rRNA, where it nucleates assembly of the 50S subunit. One of the proteins that surrounds the polypeptide exit tunnel on the outside of the subunit. This chain is Large ribosomal subunit protein uL24, found in Shewanella piezotolerans (strain WP3 / JCM 13877).